A 419-amino-acid polypeptide reads, in one-letter code: Glutamyl-tRNA reductase (419 aa).

Residues 49–52 (TCNR), S107, 112–114 (EPQ), and Q118 each bind substrate. C50 functions as the Nucleophile in the catalytic mechanism. An NADP(+)-binding site is contributed by 187 to 192 (GAGETI).

This sequence belongs to the glutamyl-tRNA reductase family. As to quaternary structure, homodimer.

The enzyme catalyses (S)-4-amino-5-oxopentanoate + tRNA(Glu) + NADP(+) = L-glutamyl-tRNA(Glu) + NADPH + H(+). It participates in porphyrin-containing compound metabolism; protoporphyrin-IX biosynthesis; 5-aminolevulinate from L-glutamyl-tRNA(Glu): step 1/2. Its function is as follows. Catalyzes the NADPH-dependent reduction of glutamyl-tRNA(Glu) to glutamate 1-semialdehyde (GSA). This Vibrio atlanticus (strain LGP32) (Vibrio splendidus (strain Mel32)) protein is Glutamyl-tRNA reductase.